The chain runs to 96 residues: Myosuppressin (96 aa).

The N-terminal stretch at 1–24 (MALGNGYYCAVVCVVLACASVVLC) is a signal peptide. The propeptide occupies 25–80 (APAQLCAGAADDDPRAARFCQALNTFLELYAEAAGEQVPEYQALVRDYPQLLDTGM). Pyrrolidone carboxylic acid; partial is present on Gln83. Residue Phe92 is modified to Phenylalanine amide. A propeptide is located at residue Arg96.

Belongs to the myosuppressin family. Expressed in corpora cardiaca (CC), corpora allata (CA), antennal lobe (AL) and gnathal ganglion (GNG) (at protein level). In its non-pyroglutamate form, expression in GNG detected in all animals, in AL, CC and in CA in most animals (at protein level). In its pyroglutamate form, expression in CC, CA and GNG detected in all animals, in AL in some animals (at protein level).

It is found in the secreted. Functionally, myoinhibiting neuropeptide. The sequence is that of Myosuppressin from Agrotis ipsilon (Black cutworm moth).